The primary structure comprises 339 residues: Glyceraldehyde-3-phosphate dehydrogenase (339 aa).

NAD(+)-binding positions include 12–13, D34, R78, and T120; that span reads RI. D-glyceraldehyde 3-phosphate is bound by residues 149–151, T180, 209–210, and R232; these read SCT and TG. C150 functions as the Nucleophile in the catalytic mechanism. N319 contacts NAD(+).

The protein belongs to the glyceraldehyde-3-phosphate dehydrogenase family. In terms of assembly, homotetramer.

The protein resides in the cytoplasm. It catalyses the reaction D-glyceraldehyde 3-phosphate + phosphate + NAD(+) = (2R)-3-phospho-glyceroyl phosphate + NADH + H(+). Its pathway is carbohydrate degradation; glycolysis; pyruvate from D-glyceraldehyde 3-phosphate: step 1/5. In terms of biological role, catalyzes the oxidative phosphorylation of glyceraldehyde 3-phosphate (G3P) to 1,3-bisphosphoglycerate (BPG) using the cofactor NAD. The first reaction step involves the formation of a hemiacetal intermediate between G3P and a cysteine residue, and this hemiacetal intermediate is then oxidized to a thioester, with concomitant reduction of NAD to NADH. The reduced NADH is then exchanged with the second NAD, and the thioester is attacked by a nucleophilic inorganic phosphate to produce BPG. The sequence is that of Glyceraldehyde-3-phosphate dehydrogenase (gapA) from Haemophilus influenzae (strain ATCC 51907 / DSM 11121 / KW20 / Rd).